Reading from the N-terminus, the 1158-residue chain is ATP-dependent helicase/deoxyribonuclease subunit B (1158 aa).

The protein belongs to the helicase family. AddB/RexB type 2 subfamily. As to quaternary structure, heterodimer of AddA and RexB. The cofactor is Mg(2+).

Its function is as follows. The heterodimer acts as both an ATP-dependent DNA helicase and an ATP-dependent, dual-direction single-stranded exonuclease. Recognizes the chi site generating a DNA molecule suitable for the initiation of homologous recombination. This subunit has 5' -&gt; 3' nuclease activity but not helicase activity. The chain is ATP-dependent helicase/deoxyribonuclease subunit B from Lactobacillus gasseri (strain ATCC 33323 / DSM 20243 / BCRC 14619 / CIP 102991 / JCM 1131 / KCTC 3163 / NCIMB 11718 / NCTC 13722 / AM63).